The following is a 105-amino-acid chain: Large ribosomal subunit protein uL24 (105 aa).

The protein belongs to the universal ribosomal protein uL24 family. As to quaternary structure, part of the 50S ribosomal subunit.

Its function is as follows. One of two assembly initiator proteins, it binds directly to the 5'-end of the 23S rRNA, where it nucleates assembly of the 50S subunit. In terms of biological role, one of the proteins that surrounds the polypeptide exit tunnel on the outside of the subunit. The protein is Large ribosomal subunit protein uL24 of Francisella tularensis subsp. tularensis (strain FSC 198).